The primary structure comprises 624 residues: Elongation factor 4 (624 aa).

In terms of domain architecture, tr-type G spans 17–203 (ALIRNFCIIA…RVVRDVPAPV (187 aa)). GTP is bound by residues 29–34 (DHGKST) and 150–153 (NKID).

The protein belongs to the TRAFAC class translation factor GTPase superfamily. Classic translation factor GTPase family. LepA subfamily.

It is found in the cell membrane. It catalyses the reaction GTP + H2O = GDP + phosphate + H(+). Functionally, required for accurate and efficient protein synthesis under certain stress conditions. May act as a fidelity factor of the translation reaction, by catalyzing a one-codon backward translocation of tRNAs on improperly translocated ribosomes. Back-translocation proceeds from a post-translocation (POST) complex to a pre-translocation (PRE) complex, thus giving elongation factor G a second chance to translocate the tRNAs correctly. Binds to ribosomes in a GTP-dependent manner. This chain is Elongation factor 4, found in Streptomyces griseus subsp. griseus (strain JCM 4626 / CBS 651.72 / NBRC 13350 / KCC S-0626 / ISP 5235).